The sequence spans 1135 residues: APC membrane recruitment protein 1 (1135 aa).

Residue Met1 is modified to N-acetylmethionine. 7 disordered regions span residues 1–115 (METQ…EGTG), 156–308 (AEKF…VGDP), 339–405 (SMTD…EDDD), 447–484 (GLAPGELLTPQSDQQESAPNSDEGYYDSTTPGFEDDSG), 736–764 (NFGGSPRRAYPTYSPPEDPEEEEVEKEGN), 921–948 (LQAQQEDSDEEDEEEEEGEWSRDSPLSL), and 1007–1135 (VPES…NLAK). Residues 10 to 19 (QAKGAAASGS) are compositionally biased toward low complexity. Residues 23-35 (QTAEKGAKNKAAE) are compositionally biased toward basic and acidic residues. The span at 36 to 50 (ATEGPTSEPSSSGPG) shows a compositional bias: low complexity. Residues 73–83 (FGGGRSKGSGK) are compositionally biased toward gly residues. Composition is skewed to basic and acidic residues over residues 94 to 107 (KTHDGLSEAAHGPE) and 196 to 208 (GPERVRARPHEHV). Over residues 238–248 (KVSPTPEPSPP) the composition is skewed to pro residues. At Ser246 the chain carries Phosphoserine. 2 stretches are compositionally biased toward basic and acidic residues: residues 253–262 (MACKDPEKPM) and 282–291 (EEPHSPETGE). The segment covering 373-405 (ALPDDDDEEEEEEEEVELEEEEEEVKEEEEDDD) has biased composition (acidic residues). Residues 455 to 466 (TPQSDQQESAPN) show a composition bias toward polar residues. Residues 926–938 (EDSDEEDEEEEEG) show a composition bias toward acidic residues. Positions 1058-1069 (PSCSSSSGGFSP) are enriched in low complexity. Residues 1119-1135 (SLATSYSSTAMNGNLAK) are compositionally biased toward polar residues.

This sequence belongs to the Amer family. Interacts with CTNNB1, AXIN1, LRP6, KEAP1, APC and BTRC. Interacts with SCF (SKP1-CUL1-F-box protein) E3 ubiquitin-protein ligase complexes containing BTRC and/or FBXW11. Identified in the beta-catenin destruction complex containing CTNNB1, APC, AXIN1 and AXIN2. Interacts with WT1. As to expression, detected in fetal and adult kidney, brain and spleen.

It localises to the cytoplasm. Its subcellular location is the cell membrane. It is found in the nucleus. In terms of biological role, regulator of the canonical Wnt signaling pathway. Acts by specifically binding phosphatidylinositol 4,5-bisphosphate (PtdIns(4,5)P2), translocating to the cell membrane and interacting with key regulators of the canonical Wnt signaling pathway, such as components of the beta-catenin destruction complex. Acts both as a positive and negative regulator of the Wnt signaling pathway, depending on the context: acts as a positive regulator by promoting LRP6 phosphorylation. Also acts as a negative regulator by acting as a scaffold protein for the beta-catenin destruction complex and promoting stabilization of Axin at the cell membrane. Promotes CTNNB1 ubiquitination and degradation. Involved in kidney development. The sequence is that of APC membrane recruitment protein 1 (AMER1) from Homo sapiens (Human).